The following is a 353-amino-acid chain: Photosystem II protein D1 (353 aa).

Threonine 2 is modified (N-acetylthreonine). Threonine 2 carries the post-translational modification Phosphothreonine. Helical transmembrane passes span 29-46 (YIGW…TATS), 118-133 (HFLL…EWEL), and 142-156 (WIAV…AATA). Histidine 118 is a binding site for chlorophyll a. Tyrosine 126 contributes to the pheophytin a binding site. [CaMn4O5] cluster is bound by residues aspartate 170 and glutamate 189. A helical membrane pass occupies residues 197–218 (FHMLGVAGVFGGSLFSAMHGSL). Histidine 198 contacts chlorophyll a. Residues histidine 215 and 264–265 (SF) each bind a quinone. Position 215 (histidine 215) interacts with Fe cation. Residue histidine 272 participates in Fe cation binding. The chain crosses the membrane as a helical span at residues 274-288 (FLAAWPVVGIWFTAL). 4 residues coordinate [CaMn4O5] cluster: histidine 332, glutamate 333, aspartate 342, and alanine 344. A propeptide spanning residues 345 to 353 (AVEVPSTNG) is cleaved from the precursor.

This sequence belongs to the reaction center PufL/M/PsbA/D family. As to quaternary structure, PSII is composed of 1 copy each of membrane proteins PsbA, PsbB, PsbC, PsbD, PsbE, PsbF, PsbH, PsbI, PsbJ, PsbK, PsbL, PsbM, PsbT, PsbX, PsbY, PsbZ, Psb30/Ycf12, at least 3 peripheral proteins of the oxygen-evolving complex and a large number of cofactors. It forms dimeric complexes. The D1/D2 heterodimer binds P680, chlorophylls that are the primary electron donor of PSII, and subsequent electron acceptors. It shares a non-heme iron and each subunit binds pheophytin, quinone, additional chlorophylls, carotenoids and lipids. D1 provides most of the ligands for the Mn4-Ca-O5 cluster of the oxygen-evolving complex (OEC). There is also a Cl(-1) ion associated with D1 and D2, which is required for oxygen evolution. The PSII complex binds additional chlorophylls, carotenoids and specific lipids. serves as cofactor. Tyr-161 forms a radical intermediate that is referred to as redox-active TyrZ, YZ or Y-Z. In terms of processing, C-terminally processed by CTPA; processing is essential to allow assembly of the oxygen-evolving complex and thus photosynthetic growth.

Its subcellular location is the plastid. The protein localises to the chloroplast thylakoid membrane. The enzyme catalyses 2 a plastoquinone + 4 hnu + 2 H2O = 2 a plastoquinol + O2. In terms of biological role, photosystem II (PSII) is a light-driven water:plastoquinone oxidoreductase that uses light energy to abstract electrons from H(2)O, generating O(2) and a proton gradient subsequently used for ATP formation. It consists of a core antenna complex that captures photons, and an electron transfer chain that converts photonic excitation into a charge separation. The D1/D2 (PsbA/PsbD) reaction center heterodimer binds P680, the primary electron donor of PSII as well as several subsequent electron acceptors. The protein is Photosystem II protein D1 of Eucalyptus globulus subsp. globulus (Tasmanian blue gum).